We begin with the raw amino-acid sequence, 434 residues long: Enolase (434 aa).

Residue Gln163 participates in (2R)-2-phosphoglycerate binding. The Proton donor role is filled by Glu205. Mg(2+) contacts are provided by Asp242, Glu291, and Asp318. (2R)-2-phosphoglycerate contacts are provided by Lys343, Arg372, Ser373, and Lys394. Lys343 (proton acceptor) is an active-site residue.

This sequence belongs to the enolase family. Mg(2+) is required as a cofactor.

It localises to the cytoplasm. Its subcellular location is the secreted. The protein localises to the cell surface. The enzyme catalyses (2R)-2-phosphoglycerate = phosphoenolpyruvate + H2O. The protein operates within carbohydrate degradation; glycolysis; pyruvate from D-glyceraldehyde 3-phosphate: step 4/5. Its function is as follows. Catalyzes the reversible conversion of 2-phosphoglycerate (2-PG) into phosphoenolpyruvate (PEP). It is essential for the degradation of carbohydrates via glycolysis. The chain is Enolase from Streptococcus sanguinis (strain SK36).